A 391-amino-acid chain; its full sequence is Ferrochelatase (391 aa).

2 residues coordinate Fe cation: His196 and Glu281.

Belongs to the ferrochelatase family.

Its subcellular location is the cytoplasm. The catalysed reaction is heme b + 2 H(+) = protoporphyrin IX + Fe(2+). It participates in porphyrin-containing compound metabolism; protoheme biosynthesis; protoheme from protoporphyrin-IX: step 1/1. In terms of biological role, catalyzes the ferrous insertion into protoporphyrin IX. The chain is Ferrochelatase from Prochlorococcus marinus (strain NATL1A).